The following is a 355-amino-acid chain: MIEAEEQQPCKTDFYSELPKVELHAHLNGSISSHTMKKLIAQKPDLKIHDQMTVIDKGKKRTLEECFQMFQTIHQLTSSPEDILMVTKDVIKEFADDGVKYLELRSTPRRENATGMTKKTYVESILEGIKQSKQENLDIDVRYLIAVDRRGGPLVAKETVKLAEEFFLSTEGTVLGLDLSGDPTVGQAKDFLEPLLEAKKAGLKLALHLSEIPNQKKETQILLDLLPDRIGHGTFLNSGEGGSLDLVDFVRQHRIPLELCLTSNVKSQTVPSYDQHHFGFWYSIAHPSVICTDDKGVFATHLSQEYQLAAETFNLTQSQVWDLSYESINYIFASDSTRSELRKKWNHLKPRVLHI.

2 residues coordinate Zn(2+): His-24 and His-26. N(6)-methyl-AMP-binding positions include His-26, Asn-28, His-74, 106 to 109 (STPR), Asp-148, and Gly-181. A Zn(2+)-binding site is contributed by His-208. Residues Glu-211, Asp-293, and Asp-294 each coordinate N(6)-methyl-AMP. The active-site Proton donor is Glu-211. Asp-293 serves as a coordination point for Zn(2+).

The protein belongs to the metallo-dependent hydrolases superfamily. Adenosine and AMP deaminases family. As to quaternary structure, monomer. Zn(2+) is required as a cofactor.

The catalysed reaction is N(6)-methyl-AMP + H2O + H(+) = IMP + methylamine. Catalyzes the hydrolysis of the free cytosolic methylated adenosine nucleotide N(6)-methyl-AMP (N6-mAMP) to produce inositol monophosphate (IMP) and methylamine. Is required for the catabolism of cytosolic N6-mAMP, which is derived from the degradation of mRNA containing N6-methylated adenine (m6A). Catalyzes the removal of different alkyl groups not only from N6-substituted purine or 2-aminopurine nucleoside monophosphates but also from O6-substituted compounds in vitro. The polypeptide is N6-Methyl-AMP deaminase (Homo sapiens (Human)).